A 231-amino-acid chain; its full sequence is Ureidoacrylate amidohydrolase RutB (231 aa).

The active-site Proton acceptor is the Asp-25. Residue Lys-134 is part of the active site. The Nucleophile role is filled by Cys-167.

This sequence belongs to the isochorismatase family. RutB subfamily.

The catalysed reaction is (Z)-3-ureidoacrylate + H2O + H(+) = (Z)-3-aminoacrylate + NH4(+) + CO2. It carries out the reaction (Z)-3-ureidoacrylate + H2O = (Z)-3-aminoacrylate + carbamate + H(+). The enzyme catalyses (Z)-2-methylureidoacrylate + H2O + H(+) = (Z)-2-methylaminoacrylate + NH4(+) + CO2. Functionally, hydrolyzes ureidoacrylate to form aminoacrylate and carbamate. The carbamate hydrolyzes spontaneously, thereby releasing one of the nitrogen atoms of the pyrimidine ring as ammonia and one of its carbon atoms as CO2. The chain is Ureidoacrylate amidohydrolase RutB from Escherichia coli O18:K1:H7 (strain IHE3034 / ExPEC).